The following is a 435-amino-acid chain: Monodehydroascorbate reductase 4, cytosolic (435 aa).

FAD contacts are provided by residues 14–17, glutamate 41, arginine 48, lysine 53, isoleucine 96, and 147–148; these read GGVA and RD. NAD(+) is bound by residues 172 to 178, glutamate 196, arginine 202, and glycine 261; that span reads GGYIGLE. An NADP(+)-binding site is contributed by 174–178; the sequence is YIGLE. 2 residues coordinate NADP(+): arginine 202 and glycine 261. Aspartate 298 serves as a coordination point for FAD. 314–315 contributes to the NAD(+) binding site; that stretch reads EH. 314–315 lines the NADP(+) pocket; the sequence is EH. Valine 316 provides a ligand contact to FAD. Arginine 320 lines the L-ascorbate pocket. An FAD-binding site is contributed by tyrosine 349. An NAD(+)-binding site is contributed by tyrosine 349. Position 349 (tyrosine 349) interacts with NADP(+). L-ascorbate is bound at residue arginine 351.

The protein belongs to the FAD-dependent oxidoreductase family. The cofactor is FAD. As to expression, expressed in anthers.

It is found in the cytoplasm. The catalysed reaction is 2 monodehydro-L-ascorbate radical + NADH + H(+) = 2 L-ascorbate + NAD(+). Functionally, catalyzes the conversion of monodehydroascorbate to ascorbate, oxidizing NADH in the process. Ascorbate is a major antioxidant against reactive oxygen species (ROS) and nitric oxide (NO). The polypeptide is Monodehydroascorbate reductase 4, cytosolic (Oryza sativa subsp. japonica (Rice)).